The sequence spans 171 residues: Zinc uptake regulation protein (171 aa).

The protein belongs to the Fur family.

Acts as a negative controlling element, employing Zn(2+) as a cofactor to bind the operator of the repressed genes (znuACB). This is Zinc uptake regulation protein (zur) from Escherichia coli (strain K12).